Reading from the N-terminus, the 299-residue chain is Recombination-associated protein RdgC (299 aa).

It belongs to the RdgC family.

The protein localises to the cytoplasm. The protein resides in the nucleoid. Its function is as follows. May be involved in recombination. The chain is Recombination-associated protein RdgC from Laribacter hongkongensis (strain HLHK9).